The sequence spans 345 residues: MPITPQEALQRTIEHREIFHDEMVELMRQIMRGEVSDMMVAAILTGLRVKKETIGEIAGAATVMREFSRRVDVADRQHMVDIVGTGGDGSHTFNISTCAMFVAAAGGAKVAKHGNRSVSSKSGSADALEALGAVIELQPEQVASALAHTGIGFMYAPVHHPAMKVVAPVRREMGVRTIFNILGPLTNPAGSPNILMGVFHPDLVGIQARVLQELGAERALVVWGRDGMDELSLGAGTLVGELRDGQVREYEVHPEDFGIAMSASRNLKVADAAQSRAMLLQVLDNVPGPALDIVALNAGAALYVAGVADSIADGVLRARAVIADGSARARLDAYVVYTRQLAVQP.

Residues Gly84, 87 to 88 (GD), Thr92, 94 to 97 (NIST), 112 to 120 (KHGNRSVSS), and Ser124 contribute to the 5-phospho-alpha-D-ribose 1-diphosphate site. Gly84 contributes to the anthranilate binding site. Ser96 is a binding site for Mg(2+). Residue Asn115 coordinates anthranilate. Arg170 contributes to the anthranilate binding site. Positions 229 and 230 each coordinate Mg(2+).

The protein belongs to the anthranilate phosphoribosyltransferase family. In terms of assembly, homodimer. Requires Mg(2+) as cofactor.

The catalysed reaction is N-(5-phospho-beta-D-ribosyl)anthranilate + diphosphate = 5-phospho-alpha-D-ribose 1-diphosphate + anthranilate. It participates in amino-acid biosynthesis; L-tryptophan biosynthesis; L-tryptophan from chorismate: step 2/5. In terms of biological role, catalyzes the transfer of the phosphoribosyl group of 5-phosphorylribose-1-pyrophosphate (PRPP) to anthranilate to yield N-(5'-phosphoribosyl)-anthranilate (PRA). In Xanthomonas axonopodis pv. citri (strain 306), this protein is Anthranilate phosphoribosyltransferase.